Reading from the N-terminus, the 184-residue chain is Mitochondrial translation release factor in rescue (184 aa).

The N-terminal 98 residues, 1–98 (MSSRSTWALL…HVPSGIVVKC (98 aa)), are a transit peptide targeting the mitochondrion. The interval 60-124 (ESELEEQFVK…LQEKVDVFYN (65 aa)) is GGQ domain. A GGQ motif is present at residues 74 to 76 (GGQ). Gln-76 carries the N5-methylglutamine modification. Residues 130-178 (VHKEKLEAERRKRERKKRAKETLEKKKLLKELREASQNITEKKADADGI) adopt a coiled-coil conformation. The disordered stretch occupies residues 132 to 184 (KEKLEAERRKRERKKRAKETLEKKKLLKELREASQNITEKKADADGIPRGFQE). The span at 149-184 (KETLEKKKLLKELREASQNITEKKADADGIPRGFQE) shows a compositional bias: basic and acidic residues.

This sequence belongs to the prokaryotic/mitochondrial release factor family. As to quaternary structure, interacts (via C-terminus) with MTRES1 (via S4 domain). Associates with mitoribosomal S39 large subunit, peptidyl tRNA and nascent chain. Post-translationally, methylation of glutamine in the GGQ triplet by HEMK1.

The protein localises to the mitochondrion. Part of a mitoribosome-associated quality control pathway that prevents aberrant translation by responding to interruptions during elongation. As heterodimer with MTRES1, ejects the unfinished nascent chain and peptidyl transfer RNA (tRNA), respectively, from stalled ribosomes. Recruitment of mitoribosome biogenesis factors to these quality control intermediates suggests additional roles for MTRES1 and MTRF during mitoribosome rescue. This chain is Mitochondrial translation release factor in rescue, found in Mus musculus (Mouse).